The chain runs to 185 residues: MINELYKETRDRMVKSVKTLEKEMTRVRTGRASMTMLDGVKVDYYGTLTPLNQMASIAIPESRMITVQPWDISAIKEVEKGILKANIGLTPSSDGKIIRITIPPLTEDRRREIAKTVHNTCEEFKVAVRNIRRDSNDTLKSLQKDGDISEDENFKAQKEVQDITDEFIKQIEAVFAAKEKEILEL.

This sequence belongs to the RRF family.

It is found in the cytoplasm. Its function is as follows. Responsible for the release of ribosomes from messenger RNA at the termination of protein biosynthesis. May increase the efficiency of translation by recycling ribosomes from one round of translation to another. The chain is Ribosome-recycling factor from Desulforapulum autotrophicum (strain ATCC 43914 / DSM 3382 / VKM B-1955 / HRM2) (Desulfobacterium autotrophicum).